The following is a 336-amino-acid chain: Ferredoxin--NADP reductase (336 aa).

7 residues coordinate FAD: Glu34, Gln42, Tyr47, Val87, Phe121, Asp286, and Ser326.

The protein belongs to the ferredoxin--NADP reductase type 2 family. Homodimer. Requires FAD as cofactor.

The enzyme catalyses 2 reduced [2Fe-2S]-[ferredoxin] + NADP(+) + H(+) = 2 oxidized [2Fe-2S]-[ferredoxin] + NADPH. This chain is Ferredoxin--NADP reductase, found in Leuconostoc mesenteroides subsp. mesenteroides (strain ATCC 8293 / DSM 20343 / BCRC 11652 / CCM 1803 / JCM 6124 / NCDO 523 / NBRC 100496 / NCIMB 8023 / NCTC 12954 / NRRL B-1118 / 37Y).